The following is a 103-amino-acid chain: Large ribosomal subunit protein bL21 (103 aa).

The protein belongs to the bacterial ribosomal protein bL21 family. Part of the 50S ribosomal subunit. Contacts protein L20.

Functionally, this protein binds to 23S rRNA in the presence of protein L20. The polypeptide is Large ribosomal subunit protein bL21 (Legionella pneumophila (strain Lens)).